A 415-amino-acid polypeptide reads, in one-letter code: Serine/threonine transporter SstT (415 aa).

A run of 8 helical transmembrane segments spans residues 23–43 (ILIGLVLGVLLALVSKPAAIA), 47–67 (LGTLFVGALKAVAPVLVLMLV), 85–105 (ILFLYLLGTFSAALTAVLFSF), 144–164 (ALLNANYIGILVWAVGLGFAL), 181–201 (AVTFIVKVVIRFAPLGIFGLV), 220–240 (LLVLVGCMLLVALVINPLLVF), 293–313 (IPLGATINMAGAAITITVLTL), and 333–353 (VVASLCACGASGVAGGSLLLI).

This sequence belongs to the dicarboxylate/amino acid:cation symporter (DAACS) (TC 2.A.23) family.

It localises to the cell inner membrane. It catalyses the reaction L-serine(in) + Na(+)(in) = L-serine(out) + Na(+)(out). The enzyme catalyses L-threonine(in) + Na(+)(in) = L-threonine(out) + Na(+)(out). Functionally, involved in the import of serine and threonine into the cell, with the concomitant import of sodium (symport system). The polypeptide is Serine/threonine transporter SstT (Klebsiella pneumoniae (strain 342)).